Reading from the N-terminus, the 411-residue chain is Multidrug resistance protein MdtA (411 aa).

The N-terminal stretch at 1 to 19 is a signal peptide; that stretch reads MNAKRIRGLLILAAVIAIA. The segment covering 31 to 49 has biased composition (polar residues); the sequence is PAAPGTSEQHAARTSHSEN. Positions 31-58 are disordered; it reads PAAPGTSEQHAARTSHSENSGSGGGRRA.

Belongs to the membrane fusion protein (MFP) (TC 8.A.1) family. In terms of assembly, part of a tripartite efflux system composed of MdtA, MdtB and MdtC.

It is found in the cell inner membrane. The sequence is that of Multidrug resistance protein MdtA from Pectobacterium atrosepticum (strain SCRI 1043 / ATCC BAA-672) (Erwinia carotovora subsp. atroseptica).